Here is a 355-residue protein sequence, read N- to C-terminus: Uroporphyrinogen decarboxylase (355 aa).

Substrate-binding positions include 36–40 (RQAGR), Asp-85, Tyr-160, Ser-215, and His-334.

This sequence belongs to the uroporphyrinogen decarboxylase family. In terms of assembly, homodimer.

Its subcellular location is the cytoplasm. It catalyses the reaction uroporphyrinogen III + 4 H(+) = coproporphyrinogen III + 4 CO2. The protein operates within porphyrin-containing compound metabolism; protoporphyrin-IX biosynthesis; coproporphyrinogen-III from 5-aminolevulinate: step 4/4. Functionally, catalyzes the decarboxylation of four acetate groups of uroporphyrinogen-III to yield coproporphyrinogen-III. The chain is Uroporphyrinogen decarboxylase from Rhodococcus opacus (strain B4).